We begin with the raw amino-acid sequence, 156 residues long: Cell division protein SepF (156 aa).

The span at 23–36 (SYEKEQTDMKKQQD) shows a compositional bias: basic and acidic residues. Positions 23–48 (SYEKEQTDMKKQQDPPEQQDVTFPKA) are disordered. Over residues 37–48 (PPEQQDVTFPKA) the composition is skewed to polar residues.

This sequence belongs to the SepF family. In terms of assembly, homodimer. Interacts with FtsZ.

It localises to the cytoplasm. Functionally, cell division protein that is part of the divisome complex and is recruited early to the Z-ring. Probably stimulates Z-ring formation, perhaps through the cross-linking of FtsZ protofilaments. Its function overlaps with FtsA. This Bacillus cereus (strain ATCC 10987 / NRS 248) protein is Cell division protein SepF.